The chain runs to 284 residues: D-tagatose-1,6-bisphosphate aldolase subunit GatY (284 aa).

Catalysis depends on Asp82, which acts as the Proton donor. 2 residues coordinate Zn(2+): His83 and His180. Gly181 is a binding site for dihydroxyacetone phosphate. Zn(2+) is bound at residue His208. Residues 209–211 (GAS) and 230–233 (NVAT) each bind dihydroxyacetone phosphate.

Belongs to the class II fructose-bisphosphate aldolase family. TagBP aldolase GatY subfamily. Forms a complex with GatZ. Zn(2+) is required as a cofactor.

The enzyme catalyses D-tagatofuranose 1,6-bisphosphate = D-glyceraldehyde 3-phosphate + dihydroxyacetone phosphate. It participates in carbohydrate metabolism; D-tagatose 6-phosphate degradation; D-glyceraldehyde 3-phosphate and glycerone phosphate from D-tagatose 6-phosphate: step 2/2. In terms of biological role, catalytic subunit of the tagatose-1,6-bisphosphate aldolase GatYZ, which catalyzes the reversible aldol condensation of dihydroxyacetone phosphate (DHAP or glycerone-phosphate) with glyceraldehyde 3-phosphate (G3P) to produce tagatose 1,6-bisphosphate (TBP). Requires GatZ subunit for full activity and stability. Is involved in the catabolism of galactitol. The protein is D-tagatose-1,6-bisphosphate aldolase subunit GatY of Escherichia coli O17:K52:H18 (strain UMN026 / ExPEC).